The sequence spans 288 residues: Cyclin-dependent kinase 2 homolog (288 aa).

A Protein kinase domain is found at 4–284 (YHGLEKIGEG…AKQAIEHPYF (281 aa)). ATP is bound by residues 10–18 (IGEGTYGVV) and K32. Position 14 is a phosphothreonine (T14). Residue Y15 is modified to Phosphotyrosine. D125 acts as the Proton acceptor in catalysis. T158 bears the Phosphothreonine mark.

This sequence belongs to the protein kinase superfamily. CMGC Ser/Thr protein kinase family. CDC2/CDKX subfamily. In terms of assembly, may form a complex composed of at least the catalytic subunit CRK2 and a cyclin. The cofactor is Mg(2+).

The protein localises to the cytoplasm. The catalysed reaction is L-seryl-[protein] + ATP = O-phospho-L-seryl-[protein] + ADP + H(+). It catalyses the reaction L-threonyl-[protein] + ATP = O-phospho-L-threonyl-[protein] + ADP + H(+). It carries out the reaction [DNA-directed RNA polymerase] + ATP = phospho-[DNA-directed RNA polymerase] + ADP + H(+). With respect to regulation, phosphorylation at Thr-14 or Tyr-15 inactivates the enzyme, while phosphorylation at Thr-158 activates it. Functionally, serine/threonine-protein kinase. Involved in the control of the cell cycle. Required for entry into S-phase and mitosis. Probable component of the kinase complex that phosphorylates the repetitive C-terminus of RNA polymerase II. The protein is Cyclin-dependent kinase 2 homolog of Plasmodium chabaudi chabaudi.